The primary structure comprises 650 residues: Glycoprotein antigen BM86 (650 aa).

Residues methionine 1–alanine 19 form the signal peptide. EGF-like domains follow at residues glutamate 20 to glutamate 66 and tyrosine 67 to lysine 104. 6 disulfides stabilise this stretch: cysteine 24–cysteine 37, cysteine 32–cysteine 49, cysteine 51–cysteine 65, cysteine 71–cysteine 81, cysteine 76–cysteine 91, and cysteine 93–cysteine 103. N-linked (GlcNAc...) asparagine glycans are attached at residues asparagine 141 and asparagine 182. EGF-like domains are found at residues cysteine 205–lysine 247, histidine 251–isoleucine 292, and cysteine 291–leucine 335. 9 disulfide bridges follow: cysteine 209/cysteine 222, cysteine 218/cysteine 231, cysteine 233/cysteine 246, cysteine 255/cysteine 269, cysteine 263/cysteine 278, cysteine 280/cysteine 291, cysteine 295/cysteine 307, cysteine 300/cysteine 316, and cysteine 318/cysteine 334. Asparagine 348 and asparagine 382 each carry an N-linked (GlcNAc...) asparagine glycan. EGF-like domains are found at residues arginine 482–isoleucine 530 and glutamate 531–tyrosine 568. 6 disulfides stabilise this stretch: cysteine 486/cysteine 500, cysteine 492/cysteine 516, cysteine 518/cysteine 529, cysteine 535/cysteine 550, cysteine 543/cysteine 559, and cysteine 561/cysteine 567. Positions lysine 603–alanine 628 are disordered. Serine 627 carries the GPI-anchor amidated serine lipid modification. A propeptide spans alanine 628 to leucine 650 (removed in mature form).

It localises to the cell membrane. This is Glycoprotein antigen BM86 from Rhipicephalus microplus (Cattle tick).